The following is a 298-amino-acid chain: N-acetylmuramic acid 6-phosphate etherase (298 aa).

Residues 55–218 (IHAQVSGGGR…STGLMIKSGK (164 aa)) enclose the SIS domain. Catalysis depends on Glu83, which acts as the Proton donor. Residue Glu114 is part of the active site.

Belongs to the GCKR-like family. MurNAc-6-P etherase subfamily. As to quaternary structure, homodimer.

It catalyses the reaction N-acetyl-D-muramate 6-phosphate + H2O = N-acetyl-D-glucosamine 6-phosphate + (R)-lactate. Its pathway is amino-sugar metabolism; 1,6-anhydro-N-acetylmuramate degradation. The protein operates within amino-sugar metabolism; N-acetylmuramate degradation. It participates in cell wall biogenesis; peptidoglycan recycling. Its function is as follows. Specifically catalyzes the cleavage of the D-lactyl ether substituent of MurNAc 6-phosphate, producing GlcNAc 6-phosphate and D-lactate. Together with AnmK, is also required for the utilization of anhydro-N-acetylmuramic acid (anhMurNAc) either imported from the medium or derived from its own cell wall murein, and thus plays a role in cell wall recycling. The sequence is that of N-acetylmuramic acid 6-phosphate etherase from Escherichia coli O157:H7 (strain EC4115 / EHEC).